The primary structure comprises 206 residues: Large ribosomal subunit protein uL4 (206 aa).

The protein belongs to the universal ribosomal protein uL4 family. As to quaternary structure, part of the 50S ribosomal subunit.

In terms of biological role, one of the primary rRNA binding proteins, this protein initially binds near the 5'-end of the 23S rRNA. It is important during the early stages of 50S assembly. It makes multiple contacts with different domains of the 23S rRNA in the assembled 50S subunit and ribosome. Functionally, forms part of the polypeptide exit tunnel. The polypeptide is Large ribosomal subunit protein uL4 (Rhodopseudomonas palustris (strain ATCC BAA-98 / CGA009)).